Here is a 341-residue protein sequence, read N- to C-terminus: Protein arginine N-methyltransferase 1 (341 aa).

The 296-residue stretch at 20–315 (ADYYFDSYSH…DCAPFDKNQR (296 aa)) folds into the SAM-dependent MTase PRMT-type domain. Residues His-33, Arg-42, Gly-66, Asp-88, and Glu-117 each contribute to the S-adenosyl-L-methionine site. Catalysis depends on residues Glu-132 and Glu-141.

It belongs to the class I-like SAM-binding methyltransferase superfamily. Protein arginine N-methyltransferase family.

It is found in the nucleus. The protein resides in the cytoplasm. The protein localises to the cytosol. It carries out the reaction L-arginyl-[protein] + 2 S-adenosyl-L-methionine = N(omega),N(omega)-dimethyl-L-arginyl-[protein] + 2 S-adenosyl-L-homocysteine + 2 H(+). The catalysed reaction is L-arginyl-[protein] + S-adenosyl-L-methionine = N(omega)-methyl-L-arginyl-[protein] + S-adenosyl-L-homocysteine + H(+). In terms of biological role, arginine methyltransferase that methylates the guanidino nitrogens of arginyl residues present in proteins such as ribonucleoproteins and histones. The sequence is that of Protein arginine N-methyltransferase 1 (prmt1) from Dictyostelium discoideum (Social amoeba).